Reading from the N-terminus, the 409-residue chain is Multifunctional CCA protein (409 aa).

Residues Gly8 and Arg11 each contribute to the ATP site. The CTP site is built by Gly8 and Arg11. 2 residues coordinate Mg(2+): Asp21 and Asp23. The ATP site is built by Arg91, Arg137, and Arg140. Residues Arg91, Arg137, and Arg140 each contribute to the CTP site. An HD domain is found at 228–329 (TGVHTLSVLE…LELLQSFDVY (102 aa)).

It belongs to the tRNA nucleotidyltransferase/poly(A) polymerase family. Bacterial CCA-adding enzyme type 1 subfamily. In terms of assembly, monomer. Can also form homodimers and oligomers. Requires Mg(2+) as cofactor. It depends on Ni(2+) as a cofactor.

It carries out the reaction a tRNA precursor + 2 CTP + ATP = a tRNA with a 3' CCA end + 3 diphosphate. It catalyses the reaction a tRNA with a 3' CCA end + 2 CTP + ATP = a tRNA with a 3' CCACCA end + 3 diphosphate. Its function is as follows. Catalyzes the addition and repair of the essential 3'-terminal CCA sequence in tRNAs without using a nucleic acid template. Adds these three nucleotides in the order of C, C, and A to the tRNA nucleotide-73, using CTP and ATP as substrates and producing inorganic pyrophosphate. tRNA 3'-terminal CCA addition is required both for tRNA processing and repair. Also involved in tRNA surveillance by mediating tandem CCA addition to generate a CCACCA at the 3' terminus of unstable tRNAs. While stable tRNAs receive only 3'-terminal CCA, unstable tRNAs are marked with CCACCA and rapidly degraded. The polypeptide is Multifunctional CCA protein (Pseudomonas fluorescens (strain SBW25)).